Consider the following 259-residue polypeptide: Phosphate import ATP-binding protein PstB (259 aa).

An ABC transporter domain is found at 5–248 (IDVSGLHVYY…NKIFTKPEKK (244 aa)). Residue 37 to 44 (GSSGCGKS) coordinates ATP.

The protein belongs to the ABC transporter superfamily. Phosphate importer (TC 3.A.1.7) family. In terms of assembly, the complex is composed of two ATP-binding proteins (PstB), two transmembrane proteins (PstC and PstA) and a solute-binding protein (PstS).

It localises to the cell membrane. It carries out the reaction phosphate(out) + ATP + H2O = ADP + 2 phosphate(in) + H(+). Functionally, part of the ABC transporter complex PstSACB involved in phosphate import. Responsible for energy coupling to the transport system. This is Phosphate import ATP-binding protein PstB from Thermobifida fusca (strain YX).